A 127-amino-acid polypeptide reads, in one-letter code: Aspartate 1-decarboxylase (127 aa).

The active-site Schiff-base intermediate with substrate; via pyruvic acid is serine 25. Serine 25 bears the Pyruvic acid (Ser) mark. Threonine 57 contacts substrate. Residue tyrosine 58 is the Proton donor of the active site. Residue 73–75 (GAA) participates in substrate binding.

Belongs to the PanD family. As to quaternary structure, heterooctamer of four alpha and four beta subunits. The cofactor is pyruvate. In terms of processing, is synthesized initially as an inactive proenzyme, which is activated by self-cleavage at a specific serine bond to produce a beta-subunit with a hydroxyl group at its C-terminus and an alpha-subunit with a pyruvoyl group at its N-terminus.

The protein resides in the cytoplasm. It catalyses the reaction L-aspartate + H(+) = beta-alanine + CO2. It participates in cofactor biosynthesis; (R)-pantothenate biosynthesis; beta-alanine from L-aspartate: step 1/1. Functionally, catalyzes the pyruvoyl-dependent decarboxylation of aspartate to produce beta-alanine. The polypeptide is Aspartate 1-decarboxylase (Clostridium kluyveri (strain NBRC 12016)).